A 148-amino-acid chain; its full sequence is MGRFIFVSFGLLVMFLSLSGTEAGVCCPFGWSGYDQNCYKAFEELMTWADAEKFCTQQHKGSHLLSLHNIAEADFVVKTTVSGSKDGVIWMGLSDVWNECNWGWTDGAQLDYKAWNVASNCFIFKTAENNWSRTDCSGTHNFVCKSPA.

Residues 1 to 23 form the signal peptide; it reads MGRFIFVSFGLLVMFLSLSGTEA. Intrachain disulfides connect C27–C38, C55–C144, and C121–C136. Residues 34-145 form the C-type lectin domain; the sequence is YDQNCYKAFE…CSGTHNFVCK (112 aa). N-linked (GlcNAc...) asparagine glycosylation is present at N130.

This sequence belongs to the snaclec family. Heterodimer; disulfide-linked. As to expression, expressed by the venom gland.

Its subcellular location is the secreted. Interferes with one step of hemostasis (modulation of platelet aggregation, or coagulation cascade, for example). The protein is Snaclec 6 of Bitis arietans (African puff adder).